A 620-amino-acid chain; its full sequence is MDSHTLLQALIYLGSAALIVPIAVRLGLGSVLGYLIAGCIIGPWGLRLVTDAESILHFAEIGVVLMLFVIGLELDPQRLWKLRASVFGGGALQMVVCGGLIGLFCMFLGLRWQVAELIGMTLALSSTAIAMQAMNERNLTVSQVGRSAFAVLLFQDIAAIPLVAMIPLLAASGASTTLGAFALSALKVAGALALVVLLGRYVTRPALRFVARSGLREVFSAVALFLVFGFGLLLEEVGLSMAMGAFLAGVLLASSEYRHALESDIEPFKGLLLGLFFIGVGMSIDFGTLVENPLRILLLLAGFLAIKIVMLWLVARPLGVPAKQRRWFAVLLGQGSEFAFVVFGAAQMADVLEPEWAKALTLAVALSMAATPIFLVLLTRMEKTATGEAREADEIDEEQPRVIVAGFGRFGQIAGRLLLSSGVKMVVLDHDPDHIETLRKFGMKVFYGDATRMDLLESAGAAKAEVLINAIDDPQTNLQLSELVKTHFPHLQIIARARDVDHYIRLRQAGVAMPERETFEGALKSGRQALEALGLGRYEARERADLFRHFNTRMVEEMAKGENDPLSRAAAYKRTSAMLSEIITEDREHLSLIQRHGWQGTAEGKHSGEVADEPEVKPSI.

12 helical membrane-spanning segments follow: residues 4–24 (HTLL…PIAV), 26–46 (LGLG…PWGL), 54–74 (SILH…GLEL), 90–110 (GALQ…FLGL), 114–134 (VAEL…MQAM), 149–169 (FAVL…IPLL), 178–198 (LGAF…VVLL), 218–238 (VFSA…EEVG), 270–290 (GLLL…GTLV), 294–314 (LRIL…LWLV), 327–347 (WFAV…GAAQ), and 359–379 (ALTL…VLLT). The RCK N-terminal domain occupies 399-518 (QPRVIVAGFG…AGVAMPERET (120 aa)). Residues 599–620 (QGTAEGKHSGEVADEPEVKPSI) are disordered.

This sequence belongs to the monovalent cation:proton antiporter 2 (CPA2) transporter (TC 2.A.37) family. KefC subfamily. Homodimer. Interacts with the regulatory subunit KefF.

It localises to the cell inner membrane. In terms of biological role, pore-forming subunit of a potassium efflux system that confers protection against electrophiles. Catalyzes K(+)/H(+) antiport. This chain is Glutathione-regulated potassium-efflux system protein KefC, found in Salmonella agona (strain SL483).